The primary structure comprises 1090 residues: MSSDSNDLDEDELLQMALKEQAKRDLTYQKPPSSSARKPVANLVQQPRQQKPVAAAAAPPKKSAAAVRKPSMDEDEESEVELLSISSGDDDLEREREIGGSSGGAGRGRGSDVREKGRARKEDDGAWDGGEPDCWKRVNEAELARRVRDMRESRTAPVVQKVEGKAPAPGKKVALTSLQSLPRGMECIDPLKLGIIDNKTLRLITESSGSPSKAEKVDNTLREKLVYFSDHFDPKLFLSRIHQDTTAADLEAGALGLKSDLKGRNLQRKQLVKDNFDCFVSCKTTIDDIESKLKRIEEDPEGSGTTHLFNCMKSVTSRANLAFEPLFERQAQAEKIRSVQGMLQRFRTLFNLPSIIRSSISKGEYDLAVREYKKAKSIALPSHVNILKRVLEEVEKVMLEFKGTLYKSMEDPKIDFTSLENTVRLLLELEPESDPVWHYLNVQNHRIHGLLEKCTYDHEARVEILRNDTHEKAISDAKWQQIQQNGVSYSDTASSNENNAVQVDLQSVEFPSEEIDILKGRYIKRLTAVLVHHIPVFWKTAISIFSGKFAKSSQVTDTSANKAEEKVTEARYSTHSLEEVAGMIRKTISVYEAKVNSTFCDFDESCILRPFMSDAINEVSKACQAFEAKESTPHSAVVALRKIQAEITKIYIQRLCSWMRASTEGISKEETWIPVSILERNRSPYAISYLPLAFRSVIVSGMEQVNLMILSVKSEAAKSEDMFAQIEEIIISVRLAFLNCFLDFAAHLEQIGADLSQSTSRQDNWKNGYSDEHQEEPSANTYGSVIDPHRRLLMVLSNIGYCKDELASELYNKFKYTWLQSRDKNEDSSDLQDLIMSFSGLGEKVLEHYTFAKANLIRTAATNYLLDSGIQWGSAPQVKGIRDAAVELLHTLVAVHAEVFAGAKPLLDKILGVLIEGLIDTFLSVVEENRSSDLRSIDANGFCQLMFELEYFETVLYSYFTSAATESLKSLQGTVLEIAIESISEAVETPGHNRRPTRGSEDTVSDDKQSVSADDLLALTKQCSNELLQQELERTRVNTACFAESAPLESTPPLPKATYSSFRGSMDSPSRNYRGSQSSGSPINARPRRR.

Residues 18-128 (LKEQAKRDLT…ARKEDDGAWD (111 aa)) form a disordered region. The span at 45 to 69 (QQPRQQKPVAAAAAPPKKSAAAVRK) shows a compositional bias: low complexity. A compositionally biased stretch (basic and acidic residues) spans 109–124 (RGSDVREKGRARKEDD). Phosphoserine is present on serine 180. 3 disordered regions span residues 759–783 (TSRQ…NTYG), 987–1010 (VETP…DKQS), and 1046–1090 (APLE…PRRR). The span at 998–1009 (RGSEDTVSDDKQ) shows a compositional bias: basic and acidic residues. Polar residues predominate over residues 1058–1082 (TYSSFRGSMDSPSRNYRGSQSSGSP).

It belongs to the SEC5 family. As to quaternary structure, the exocyst complex is composed of SEC3, SEC5, SEC6, SEC8, SEC10, EXO70A1 and EXO84B. Interacts with SEC3A and EXO70B1. Binds to EXO70H1 and EXO70B2. Binds directly to B1L.

Its subcellular location is the cytoplasm. The protein resides in the cytosol. It localises to the secreted. The protein localises to the extracellular exosome. Component of the exocyst complex involved in the docking of exocytic vesicles with fusion sites on the plasma membrane during regulated or polarized secretion. Involved in polarized cell growth and organ morphogenesis. During cytokinesis, involved in cell plate initiation, cell plate maturation and formation of new primary cell wall. Probable component of an exocyst subcomplex specifically involved in autophagy-related, Golgi-independent membrane traffic to the vacuole. Regulates autophagosome formation and autophagy-related Golgi-independent import into the vacuole. The sequence is that of Exocyst complex component SEC5A from Arabidopsis thaliana (Mouse-ear cress).